The following is a 301-amino-acid chain: N-carbamoylputrescine amidase (301 aa).

The 259-residue stretch at 11-269 (VSVAAVQFAC…EDVLVAEFDL (259 aa)) folds into the CN hydrolase domain. Residue E50 is the Proton acceptor of the active site. Catalysis depends on K123, which acts as the Proton donor. C160 serves as the catalytic Nucleophile.

It belongs to the carbon-nitrogen hydrolase superfamily. In terms of assembly, homooctamer.

It catalyses the reaction N-carbamoylputrescine + H2O + 2 H(+) = putrescine + NH4(+) + CO2. It functions in the pathway amine and polyamine biosynthesis; putrescine biosynthesis via agmatine pathway; putrescine from N-carbamoylputrescine (amidase route): step 1/1. Involved in polyamine biosynthesis. This Oryza sativa subsp. japonica (Rice) protein is N-carbamoylputrescine amidase (CPA).